Here is a 1008-residue protein sequence, read N- to C-terminus: Serine/threonine-protein kinase PRP4 homolog (1008 aa).

The interval methionine 1–leucine 103 is disordered. Alanine 2 bears the N-acetylalanine mark. Phosphoserine is present on residues serine 8, serine 20, serine 23, and serine 32. Basic residues-rich tracts occupy residues lysine 39–histidine 59 and arginine 67–lysine 81. The segment covering glutamate 82–glycine 91 has biased composition (basic and acidic residues). Phosphoserine occurs at positions 87 and 93. Lysine 99 carries the N6-acetyllysine; alternate modification. Residue lysine 99 forms a Glycyl lysine isopeptide (Lys-Gly) (interchain with G-Cter in SUMO2); alternate linkage. Residue lysine 111 forms a Glycyl lysine isopeptide (Lys-Gly) (interchain with G-Cter in SUMO2) linkage. Lysine 117 participates in a covalent cross-link: Glycyl lysine isopeptide (Lys-Gly) (interchain with G-Cter in SUMO2); alternate. A Glycyl lysine isopeptide (Lys-Gly) (interchain with G-Cter in SUMO1); alternate cross-link involves residue lysine 117. A Phosphoserine modification is found at serine 131. At tyrosine 140 the chain carries Phosphotyrosine. 2 disordered regions span residues tyrosine 140 to glutamate 536 and serine 560 to aspartate 584. A phosphoserine mark is found at serine 142, serine 144, and serine 166. Positions glycine 157–lysine 168 are enriched in low complexity. Residues lysine 170 and lysine 177 each participate in a glycyl lysine isopeptide (Lys-Gly) (interchain with G-Cter in SUMO2) cross-link. Composition is skewed to basic residues over residues serine 179 to lysine 202 and arginine 214 to serine 230. A phosphoserine mark is found at serine 239, serine 241, serine 257, serine 277, serine 283, serine 292, and serine 294. Basic and acidic residues predominate over residues arginine 247–lysine 270. Residues serine 302–lysine 315 are compositionally biased toward basic residues. Positions arginine 316–proline 325 are enriched in basic and acidic residues. Phosphoserine occurs at positions 328, 354, 356, 366, and 368. Over residues proline 342–arginine 367 the composition is skewed to basic residues. A Phosphothreonine modification is found at threonine 385. Serine 387 bears the Phosphoserine mark. 2 stretches are compositionally biased toward basic and acidic residues: residues arginine 395–arginine 408 and arginine 415–aspartate 429. Residues serine 427, serine 431, and serine 437 each carry the phosphoserine modification. Residues proline 438–serine 498 show a composition bias toward basic residues. A phosphoserine mark is found at serine 519, serine 520, serine 521, serine 566, serine 570, serine 577, serine 579, and serine 581. The segment covering serine 519 to glutamate 536 has biased composition (acidic residues). Residues serine 563–proline 582 show a composition bias toward low complexity. Glycyl lysine isopeptide (Lys-Gly) (interchain with G-Cter in SUMO2) cross-links involve residues lysine 594 and lysine 660. The Protein kinase domain occupies tyrosine 688–isoleucine 1004. Residues threonine 694 to valine 702 and lysine 718 each bind ATP. Lysine 718 is subject to N6-acetyllysine. Aspartate 816 functions as the Proton acceptor in the catalytic mechanism. Tyrosine 850 is modified (phosphotyrosine). A Phosphoserine modification is found at serine 853.

The protein belongs to the protein kinase superfamily. CMGC Ser/Thr protein kinase family. In terms of assembly, interacts with CLK1 C-terminus. Associates with the U5 snRNP and NCOR1 deacetylase complexes. Identified in the spliceosome C complex. Post-translationally, phosphorylated by CLK1. Autophosphorylated; phosphorylation inhibits interaction with its targets, such as PRPF6 or SMARCA4.

Its subcellular location is the nucleus. It is found in the chromosome. It localises to the centromere. The protein resides in the kinetochore. It carries out the reaction L-seryl-[protein] + ATP = O-phospho-L-seryl-[protein] + ADP + H(+). The catalysed reaction is L-threonyl-[protein] + ATP = O-phospho-L-threonyl-[protein] + ADP + H(+). In terms of biological role, serine/threonine kinase involved in spliceosomal assembly as well as mitosis and signaling regulation. Connects chromatin mediated regulation of transcription and pre-mRNA splicing. During spliceosomal assembly, interacts with and phosphorylates PRPF6 and PRPF31, components of the U4/U6-U5 tri-small nuclear ribonucleoprotein (snRNP), to facilitate the formation of the spliceosome B complex. Plays a role in regulating transcription and the spindle assembly checkpoint (SAC). Associates with U5 snRNP and NCOR1 deacetylase complexes which may allow a coordination of pre-mRNA splicing with chromatin remodeling events involved in transcriptional regulation. Associates and probably phosphorylates SMARCA4 and NCOR1. Phosphorylates SRSF1. Associates with kinetochores during mitosis and is necessary for recruitment and maintenance of the checkpoint proteins such as MAD1L1 and MAD12L1 at the kinetochores. Phosphorylates and regulates the activity of the transcription factors such as ELK1 and KLF13. Phosphorylates nuclear YAP1 and WWTR1/TAZ which induces nuclear exclusion and regulates Hippo signaling pathway, involved in tissue growth control. This Bos taurus (Bovine) protein is Serine/threonine-protein kinase PRP4 homolog (PRP4K).